Reading from the N-terminus, the 454-residue chain is Exodeoxyribonuclease 7 large subunit (454 aa).

A compositionally biased stretch (low complexity) spans 337-352 (ANQRQQRASQRLRQQN). A disordered region spans residues 337 to 359 (ANQRQQRASQRLRQQNPQPRIHR).

It belongs to the XseA family. As to quaternary structure, heterooligomer composed of large and small subunits.

It localises to the cytoplasm. It carries out the reaction Exonucleolytic cleavage in either 5'- to 3'- or 3'- to 5'-direction to yield nucleoside 5'-phosphates.. Functionally, bidirectionally degrades single-stranded DNA into large acid-insoluble oligonucleotides, which are then degraded further into small acid-soluble oligonucleotides. This Salmonella arizonae (strain ATCC BAA-731 / CDC346-86 / RSK2980) protein is Exodeoxyribonuclease 7 large subunit.